The chain runs to 354 residues: Uroporphyrinogen decarboxylase (354 aa).

Residues 25-29, aspartate 75, tyrosine 152, threonine 207, and histidine 330 contribute to the substrate site; that span reads RQAGR.

The protein belongs to the uroporphyrinogen decarboxylase family. In terms of assembly, homodimer.

Its subcellular location is the cytoplasm. The catalysed reaction is uroporphyrinogen III + 4 H(+) = coproporphyrinogen III + 4 CO2. It participates in porphyrin-containing compound metabolism; protoporphyrin-IX biosynthesis; coproporphyrinogen-III from 5-aminolevulinate: step 4/4. In terms of biological role, catalyzes the decarboxylation of four acetate groups of uroporphyrinogen-III to yield coproporphyrinogen-III. This Xanthomonas euvesicatoria pv. vesicatoria (strain 85-10) (Xanthomonas campestris pv. vesicatoria) protein is Uroporphyrinogen decarboxylase.